The sequence spans 128 residues: NADH dehydrogenase [ubiquinone] 1 beta subcomplex subunit 6 (128 aa).

Threonine 2 is modified (N-acetylthreonine). The residue at position 24 (lysine 24) is an N6-acetyllysine. Residues 68-86 (SIFVFTHVLVPVWIIHYYM) traverse the membrane as a helical segment.

This sequence belongs to the complex I NDUFB6 subunit family. In terms of assembly, complex I is composed of 45 different subunits.

The protein localises to the mitochondrion inner membrane. In terms of biological role, accessory subunit of the mitochondrial membrane respiratory chain NADH dehydrogenase (Complex I), that is believed not to be involved in catalysis. Complex I functions in the transfer of electrons from NADH to the respiratory chain. The immediate electron acceptor for the enzyme is believed to be ubiquinone. In Gorilla gorilla gorilla (Western lowland gorilla), this protein is NADH dehydrogenase [ubiquinone] 1 beta subcomplex subunit 6 (NDUFB6).